A 251-amino-acid polypeptide reads, in one-letter code: Enolase-phosphatase E1 (251 aa).

Asp-13 and Glu-15 together coordinate Mg(2+). Substrate is bound by residues 137 to 138 and Lys-183; that span reads SS. Asp-210 is a Mg(2+) binding site.

The protein belongs to the HAD-like hydrolase superfamily. MasA/MtnC family. In terms of assembly, monomer. It depends on Mg(2+) as a cofactor.

The protein resides in the cytoplasm. The protein localises to the nucleus. It carries out the reaction 5-methylsulfanyl-2,3-dioxopentyl phosphate + H2O = 1,2-dihydroxy-5-(methylsulfanyl)pent-1-en-3-one + phosphate. It participates in amino-acid biosynthesis; L-methionine biosynthesis via salvage pathway; L-methionine from S-methyl-5-thio-alpha-D-ribose 1-phosphate: step 3/6. It functions in the pathway amino-acid biosynthesis; L-methionine biosynthesis via salvage pathway; L-methionine from S-methyl-5-thio-alpha-D-ribose 1-phosphate: step 4/6. Bifunctional enzyme that catalyzes the enolization of 2,3-diketo-5-methylthiopentyl-1-phosphate (DK-MTP-1-P) into the intermediate 2-hydroxy-3-keto-5-methylthiopentenyl-1-phosphate (HK-MTPenyl-1-P), which is then dephosphorylated to form the acireductone 1,2-dihydroxy-3-keto-5-methylthiopentene (DHK-MTPene). The chain is Enolase-phosphatase E1 from Candida glabrata (strain ATCC 2001 / BCRC 20586 / JCM 3761 / NBRC 0622 / NRRL Y-65 / CBS 138) (Yeast).